Consider the following 192-residue polypeptide: Fe/S biogenesis protein NfuA (192 aa).

The [4Fe-4S] cluster site is built by C149 and C152.

This sequence belongs to the NfuA family. As to quaternary structure, homodimer. [4Fe-4S] cluster serves as cofactor.

In terms of biological role, involved in iron-sulfur cluster biogenesis. Binds a 4Fe-4S cluster, can transfer this cluster to apoproteins, and thereby intervenes in the maturation of Fe/S proteins. Could also act as a scaffold/chaperone for damaged Fe/S proteins. The protein is Fe/S biogenesis protein NfuA of Tolumonas auensis (strain DSM 9187 / NBRC 110442 / TA 4).